A 313-amino-acid chain; its full sequence is Porphobilinogen deaminase (313 aa).

Position 242 is an S-(dipyrrolylmethanemethyl)cysteine (C242).

Belongs to the HMBS family. In terms of assembly, monomer. The cofactor is dipyrromethane.

The enzyme catalyses 4 porphobilinogen + H2O = hydroxymethylbilane + 4 NH4(+). The protein operates within porphyrin-containing compound metabolism; protoporphyrin-IX biosynthesis; coproporphyrinogen-III from 5-aminolevulinate: step 2/4. In terms of biological role, tetrapolymerization of the monopyrrole PBG into the hydroxymethylbilane pre-uroporphyrinogen in several discrete steps. In Pectobacterium carotovorum subsp. carotovorum (strain PC1), this protein is Porphobilinogen deaminase.